Here is an 808-residue protein sequence, read N- to C-terminus: Probable inorganic carbon transporter subunit DabA (808 aa).

Residues cysteine 334, aspartate 336, histidine 494, and cysteine 509 each coordinate Zn(2+).

It belongs to the inorganic carbon transporter (TC 9.A.2) DabA family. Forms a complex with DabB. Zn(2+) is required as a cofactor.

The protein localises to the cell inner membrane. In terms of biological role, part of an energy-coupled inorganic carbon pump. The chain is Probable inorganic carbon transporter subunit DabA from Allorhizobium ampelinum (strain ATCC BAA-846 / DSM 112012 / S4) (Agrobacterium vitis (strain S4)).